The chain runs to 251 residues: Short chain dehydrogenase gsfK (251 aa).

Leucine 14, threonine 33, glutamate 60, asparagine 88, and lysine 122 together coordinate NADP(+). Active-site proton donor residues include serine 143 and tyrosine 161. Tyrosine 161, lysine 165, valine 192, and threonine 194 together coordinate NADP(+). The Lowers pKa of active site Tyr role is filled by lysine 165.

Belongs to the short-chain dehydrogenases/reductases (SDR) family.

It functions in the pathway secondary metabolite biosynthesis; terpenoid biosynthesis. Its function is as follows. Short chain dehydrogenase; part of the gene cluster that mediates the biosynthesis of griseofulvin, an important antifungal drug that has been in use for a long time for treating dermatophyte infections. The first step of the pathway is the formation of the heptaketide backbone by gsfA which is initiated by priming with acetyl-CoA, followed by sequential condensations of 6 malonyl-CoA units. The resulting benzophenone can undergo a spontaneous dehydration to form norlichexanthone. However, the true precursor for the griseofulvin biosynthesis is not norlichexanthone, but the heptaketide benzophenone that is O-methylated at 3-OH by gsfB to produce griseophenone D which is further methylated at 9-OH by gsfC to yield griseophenone C. Griseophenone C is then substrate of halogenase gsfI which is responsible for the regio-specific chlorination at the C13 position to form griseophenone B. The cytochrome P450 gsfF catalyzes the coupling of orcinol and phloroglucinol rings in griseophenone B to form desmethyl-dehydrogriseofulvin A which is further methylated at 5-OH by gsfD to yield dehydrogriseofulvin. Finally, gsfE performs stereospecific reduction of enone 18 of dehydrogriseofulvin to afford the final product griseofulvin. The exact role of gsfK within the pathway has not been identified yet. The chain is Short chain dehydrogenase gsfK from Penicillium aethiopicum.